A 143-amino-acid chain; its full sequence is Anti-sigma F factor (143 aa).

The protein belongs to the anti-sigma-factor family.

It catalyses the reaction L-seryl-[protein] + ATP = O-phospho-L-seryl-[protein] + ADP + H(+). It carries out the reaction L-threonyl-[protein] + ATP = O-phospho-L-threonyl-[protein] + ADP + H(+). Binds to sigma F and blocks its ability to form an RNA polymerase holoenzyme (E-sigma F). Phosphorylates SpoIIAA on a serine residue. This phosphorylation may enable SpoIIAA to act as an anti-anti-sigma factor that counteracts SpoIIAB and thus releases sigma F from inhibition. The protein is Anti-sigma F factor of Clostridium acetobutylicum (strain ATCC 824 / DSM 792 / JCM 1419 / IAM 19013 / LMG 5710 / NBRC 13948 / NRRL B-527 / VKM B-1787 / 2291 / W).